A 627-amino-acid polypeptide reads, in one-letter code: Probable inactive L-type lectin-domain containing receptor kinase III.1 (627 aa).

A signal peptide spans 1 to 23 (MITFKSIALTIIFLSYFVSCVSS). The Extracellular portion of the chain corresponds to 24–303 (QRETKFLNHG…STEKKSNNTM (280 aa)). Residues 26-262 (ETKFLNHGFL…SHFVLGWSFN (237 aa)) are legume-lectin like. Asn-57, Asn-78, Asn-127, Asn-184, Asn-202, Asn-209, and Asn-230 each carry an N-linked (GlcNAc...) asparagine glycan. The disordered stretch occupies residues 272–297 (ITKLPSLPDPPPTLSPSPSPPVSTEK). The span at 278–292 (LPDPPPTLSPSPSPP) shows a compositional bias: pro residues. Asn-300 is a glycosylation site (N-linked (GlcNAc...) asparagine). The helical transmembrane segment at 304-324 (LIIIVAASATVALMILIFSGF) threads the bilayer. At 325–627 (WFLRRDKIFF…PHDDYLFYGV (303 aa)) the chain is on the cytoplasmic side. Positions 353–623 (FDNSKLLGER…TEALPHDDYL (271 aa)) constitute a Protein kinase domain. ATP is bound by residues 359–367 (LGERNSGSF) and Lys-381.

The protein in the C-terminal section; belongs to the protein kinase superfamily. Ser/Thr protein kinase family. In the N-terminal section; belongs to the leguminous lectin family.

It is found in the cell membrane. This chain is Probable inactive L-type lectin-domain containing receptor kinase III.1 (LECRK31), found in Arabidopsis thaliana (Mouse-ear cress).